A 175-amino-acid chain; its full sequence is Ribosome maturation factor RimM (175 aa).

Positions 98–175 (EGEYYWYQLE…EMRVDWDADF (78 aa)) constitute a PRC barrel domain.

It belongs to the RimM family. Binds ribosomal protein uS19.

It is found in the cytoplasm. Functionally, an accessory protein needed during the final step in the assembly of 30S ribosomal subunit, possibly for assembly of the head region. Essential for efficient processing of 16S rRNA. May be needed both before and after RbfA during the maturation of 16S rRNA. It has affinity for free ribosomal 30S subunits but not for 70S ribosomes. The chain is Ribosome maturation factor RimM from Pseudomonas paraeruginosa (strain DSM 24068 / PA7) (Pseudomonas aeruginosa (strain PA7)).